The chain runs to 634 residues: GTP-binding protein 4 (634 aa).

Ala2 is subject to N-acetylalanine. Lys103 carries the N6-acetyllysine; alternate modification. Lys103 participates in a covalent cross-link: Glycyl lysine isopeptide (Lys-Gly) (interchain with G-Cter in SUMO2); alternate. Ser122 carries the post-translational modification Phosphoserine. The 172-residue stretch at 169–340 (RTLLLCGYPN…VKTEACDRLL (172 aa)) folds into the OBG-type G domain. GTP contacts are provided by residues 175-182 (GYPNVGKS), 221-225 (DTPGI), and 289-292 (NKCD). A Glycyl lysine isopeptide (Lys-Gly) (interchain with G-Cter in SUMO2) cross-link involves residue Lys332. Phosphoserine is present on residues Ser468, Ser470, and Ser472. Residues 495–517 (ILESKEKNTQGPRMPRTAKKVQR) are disordered. Lys522 is subject to N6-acetyllysine. A disordered region spans residues 529–634 (VDMDDKDDAH…KRKAGKKDRR (106 aa)). A Glycyl lysine isopeptide (Lys-Gly) (interchain with G-Cter in SUMO2) cross-link involves residue Lys534. Basic residues predominate over residues 544 to 554 (RRSRSITRKRK). Ser558 bears the Phosphoserine mark. The span at 560–572 (PPSSVARSGSCSR) shows a compositional bias: polar residues. Positions 573 to 585 (TPRDVSGLRDVKM) are enriched in basic and acidic residues. The segment covering 586–604 (VKKAKTMMKNAQKKMNRLG) has biased composition (basic residues). A compositionally biased stretch (basic and acidic residues) spans 605–618 (KKGEADRHVFDMKP). Positions 619 to 634 (KHLLSGKRKAGKKDRR) are enriched in basic residues.

The protein belongs to the TRAFAC class OBG-HflX-like GTPase superfamily. OBG GTPase family. NOG subfamily. As to quaternary structure, associates with pre-60S ribosomal particles. Interacts with MINAS-60 (product of an alternative open reading frame of RBM10).

Its subcellular location is the nucleus. It localises to the nucleolus. Its function is as follows. Involved in the biogenesis of the 60S ribosomal subunit. Acts as a TP53 repressor, preventing TP53 stabilization and cell cycle arrest. This Homo sapiens (Human) protein is GTP-binding protein 4.